The chain runs to 186 residues: Peptidyl-tRNA hydrolase (186 aa).

Y14 is a tRNA binding site. H19 functions as the Proton acceptor in the catalytic mechanism. TRNA-binding residues include Y64, N66, and N112.

The protein belongs to the PTH family. Monomer.

The protein resides in the cytoplasm. It catalyses the reaction an N-acyl-L-alpha-aminoacyl-tRNA + H2O = an N-acyl-L-amino acid + a tRNA + H(+). Its function is as follows. Hydrolyzes ribosome-free peptidyl-tRNAs (with 1 or more amino acids incorporated), which drop off the ribosome during protein synthesis, or as a result of ribosome stalling. Catalyzes the release of premature peptidyl moieties from peptidyl-tRNA molecules trapped in stalled 50S ribosomal subunits, and thus maintains levels of free tRNAs and 50S ribosomes. In Bacillus anthracis, this protein is Peptidyl-tRNA hydrolase.